The following is a 934-amino-acid chain: Bifunctional uridylyltransferase/uridylyl-removing enzyme (934 aa).

The tract at residues 1–379 (MSAHDLKLEE…TFSRRKRKLS (379 aa)) is uridylyltransferase. The tract at residues 380–736 (ADGDFVSENH…AKPHTFEAVT (357 aa)) is uridylyl-removing. The region spanning 496–613 (VDEHLLRCIA…IDFADTVQTM (118 aa)) is the HD domain. ACT domains follow at residues 737 to 819 (EITV…VLAK) and 848 to 931 (VIEV…RSSQ).

Belongs to the GlnD family. Requires Mg(2+) as cofactor.

The catalysed reaction is [protein-PII]-L-tyrosine + UTP = [protein-PII]-uridylyl-L-tyrosine + diphosphate. It catalyses the reaction [protein-PII]-uridylyl-L-tyrosine + H2O = [protein-PII]-L-tyrosine + UMP + H(+). With respect to regulation, uridylyltransferase (UTase) activity is inhibited by glutamine, while glutamine activates uridylyl-removing (UR) activity. Modifies, by uridylylation and deuridylylation, the PII regulatory proteins (GlnB and homologs), in response to the nitrogen status of the cell that GlnD senses through the glutamine level. Under low glutamine levels, catalyzes the conversion of the PII proteins and UTP to PII-UMP and PPi, while under higher glutamine levels, GlnD hydrolyzes PII-UMP to PII and UMP (deuridylylation). Thus, controls uridylylation state and activity of the PII proteins, and plays an important role in the regulation of nitrogen assimilation and metabolism. This chain is Bifunctional uridylyltransferase/uridylyl-removing enzyme, found in Brucella anthropi (strain ATCC 49188 / DSM 6882 / CCUG 24695 / JCM 21032 / LMG 3331 / NBRC 15819 / NCTC 12168 / Alc 37) (Ochrobactrum anthropi).